The sequence spans 137 residues: Small heat shock protein IbpA (137 aa).

The region spanning 28 to 137 (SQSNGGYPPY…ANKPRRIEIN (110 aa)) is the sHSP domain.

Belongs to the small heat shock protein (HSP20) family. As to quaternary structure, monomer. Forms homomultimers of about 100-150 subunits at optimal growth temperatures. Conformation changes to monomers at high temperatures or high ionic concentrations.

It localises to the cytoplasm. Its function is as follows. Associates with aggregated proteins, together with IbpB, to stabilize and protect them from irreversible denaturation and extensive proteolysis during heat shock and oxidative stress. Aggregated proteins bound to the IbpAB complex are more efficiently refolded and reactivated by the ATP-dependent chaperone systems ClpB and DnaK/DnaJ/GrpE. Its activity is ATP-independent. This Klebsiella pneumoniae (strain 342) protein is Small heat shock protein IbpA.